Consider the following 340-residue polypeptide: S-adenosylmethionine:tRNA ribosyltransferase-isomerase (340 aa).

It belongs to the QueA family. As to quaternary structure, monomer.

Its subcellular location is the cytoplasm. It catalyses the reaction 7-aminomethyl-7-carbaguanosine(34) in tRNA + S-adenosyl-L-methionine = epoxyqueuosine(34) in tRNA + adenine + L-methionine + 2 H(+). Its pathway is tRNA modification; tRNA-queuosine biosynthesis. Its function is as follows. Transfers and isomerizes the ribose moiety from AdoMet to the 7-aminomethyl group of 7-deazaguanine (preQ1-tRNA) to give epoxyqueuosine (oQ-tRNA). This Aliarcobacter butzleri (strain RM4018) (Arcobacter butzleri) protein is S-adenosylmethionine:tRNA ribosyltransferase-isomerase.